Reading from the N-terminus, the 31-residue chain is Hemocyanin subunit 2 (31 aa).

This sequence belongs to the tyrosinase family. Hemocyanin subfamily. As to expression, hemolymph.

The protein localises to the secreted. It localises to the extracellular space. Hemocyanins are copper-containing oxygen carriers occurring freely dissolved in the hemolymph of many mollusks and arthropods. The polypeptide is Hemocyanin subunit 2 (Maja squinado (Mediterranean spider crab)).